We begin with the raw amino-acid sequence, 101 residues long: MAKKGMINRELKREKTVAKYAAKRAELKATIANVNASDEERFEAMLKLQALPRNASPVRLRNRCGLTGRPHGYFRKFGLSRNKLRDTVMQGDVPGVVKASW.

Belongs to the universal ribosomal protein uS14 family. As to quaternary structure, part of the 30S ribosomal subunit. Contacts proteins S3 and S10.

Functionally, binds 16S rRNA, required for the assembly of 30S particles and may also be responsible for determining the conformation of the 16S rRNA at the A site. This is Small ribosomal subunit protein uS14 from Acinetobacter baumannii (strain AB307-0294).